Here is a 203-residue protein sequence, read N- to C-terminus: Small ribosomal subunit protein uS4 (203 aa).

The region spanning 93–154 (RRLDNVVYRC…KSRNLDAVAD (62 aa)) is the S4 RNA-binding domain.

It belongs to the universal ribosomal protein uS4 family. In terms of assembly, part of the 30S ribosomal subunit. Contacts protein S5. The interaction surface between S4 and S5 is involved in control of translational fidelity.

One of the primary rRNA binding proteins, it binds directly to 16S rRNA where it nucleates assembly of the body of the 30S subunit. Its function is as follows. With S5 and S12 plays an important role in translational accuracy. The sequence is that of Small ribosomal subunit protein uS4 from Chlorobaculum tepidum (strain ATCC 49652 / DSM 12025 / NBRC 103806 / TLS) (Chlorobium tepidum).